Reading from the N-terminus, the 835-residue chain is Pre-mRNA-splicing factor SYF1 (835 aa).

HAT repeat units lie at residues 7 to 38 (YILDDSDIAFEYELQKSPSVEVWQRYIAHWEA), 46 to 77 (RSARHILWLYERMVTQFPTLTVWEQYIGWFRR), 313 to 348 (ADFDKMEKVLTKALSETVKTNEFIAIYTYHVNFEQA), 414 to 456 (EDFD…VYWS), 458 to 494 (KSYEEARTIYESATKVPFPDLQDLEIVWHTWAVNEFQ), 517 to 551 (SIIDRFKSENRRLPSQTILFTSKRLWNYYIDLLES), 589 to 623 (NNLHGSLQVYEKGINMFPPEICYELWTLLLDEVME), 628 to 664 (ATKERIRELFEQCLQQLGNTDININSIYVKYSDFEIH), 707 to 741 (LGPDSLRQLLSECIQELPNSKAITYVLKFTKLEMS), and 743 to 777 (SDYTRARELLQYGAQLLPPIKNEELWGLWEQFELE).

This sequence belongs to the crooked-neck family. As to quaternary structure, associated with the spliceosome.

It localises to the nucleus. Involved in pre-mRNA splicing and cell cycle progression. The polypeptide is Pre-mRNA-splicing factor SYF1 (SYF1) (Candida glabrata (strain ATCC 2001 / BCRC 20586 / JCM 3761 / NBRC 0622 / NRRL Y-65 / CBS 138) (Yeast)).